The following is a 340-amino-acid chain: Entry-fusion complex protein OPG094 (340 aa).

The disordered stretch occupies residues 1–20 (MGGGVSVELPKRDPPPGVPT). G2 carries the N-myristoyl glycine; by host lipid modification. Residues 2–319 (GGGVSVELPK…VQHNIKHSFD (318 aa)) are Virion surface-facing. Residues 320 to 340 (LKLHLISLLSLLVIWILIVAI) form a helical; Signal-anchor for type II membrane protein membrane-spanning segment.

It belongs to the orthopoxvirus OPG086 family. As to quaternary structure, interacts with OPG143. Component of the entry fusion complex (EFC) composed of OPG053, OPG076, OPG086, OPG094, OPG095, OPG099, OPG107, OPG143, OPG104, OPG147 and OPG155. Except for OPG095 and OPG053, each of the EFC proteins is required for assembly or stability of the complex. In terms of processing, unglycosylated because produced in viral factories instead of the classic ER -Golgi route.

Its subcellular location is the virion membrane. In terms of biological role, component of the entry fusion complex (EFC), which consists of 11 proteins. During cell infection, this complex mediates entry of the virion core into the host cytoplasm by a two-step mechanism consisting of lipid mixing of the viral and cellular membranes and subsequent pore formation. The polypeptide is Entry-fusion complex protein OPG094 (OPG094) (Cynomys gunnisoni (Gunnison's prairie dog)).